An 86-amino-acid polypeptide reads, in one-letter code: Kappa-theraphotoxin-Cg1a 6 (86 aa).

The signal sequence occupies residues 1–21; it reads MKVSVLITLAVLGVMFVWASA. Residues 22–50 constitute a propeptide that is removed on maturation; the sequence is AELEERGSDQRDSPAWLKSMERIFQSEER. 3 disulfide bridges follow: cysteine 52-cysteine 66, cysteine 59-cysteine 71, and cysteine 65-cysteine 78. The residue at position 84 (phenylalanine 84) is a Phenylalanine amide.

It belongs to the neurotoxin 10 (Hwtx-1) family. 28 (Jztx-11) subfamily. Expressed by the venom gland.

It is found in the secreted. Its function is as follows. This toxin acts as a voltage-dependent gating-modifier. It inhibits the sodium conductance (IC(50)=124 nM) and slows the fast inactivation (EC(50)=1180 nM) of Nav1.5/SCN5A. It significantly shifts the activation to more depolarized voltages and decreases the deactivation of Nav1.5 currents upon extreme depolarization, but only slightly affects voltage-dependence of steady-state inactivation. In addition, this toxin causes an approximately five-fold decrease in the rate of recovery from inactivation and an approximately 1.9-fold reduction in the closed-state inactivation rate. This toxin integrates the functions of site 3 toxins (alpha-scorpion toxins) with site 4 toxins (beta-scorpion and spider toxins) by targeting multiple sites on Nav1.5. Also shows inhibition of voltage-gated potassium channels (5 uM completely inhibits Kv2.1/KCNB1, whereas 5 uM moderately inhibits Kv4.2/KCND2 Kv4.1/KCND1 channels). This chain is Kappa-theraphotoxin-Cg1a 6, found in Chilobrachys guangxiensis (Chinese earth tiger tarantula).